The primary structure comprises 454 residues: Exopolyphosphatase PRUNE1 (454 aa).

Residue Met-1 is modified to N-acetylmethionine. Mn(2+) contacts are provided by Asp-28, Asp-30, Asp-106, and Asp-179. The short motif at 106 to 108 (DHH) is the DHH motif element. The interval 394 to 421 (SLISGLSQDEEDPPLPPTPMNSLVDECP) is essential for homodimerization. The disordered stretch occupies residues 397-420 (SGLSQDEEDPPLPPTPMNSLVDEC). At Ser-400 the chain carries Phosphoserine. The residue at position 411 (Thr-411) is a Phosphothreonine. Residue Ser-415 is modified to Phosphoserine.

The protein belongs to the PPase class C family. Prune subfamily. Homooligomer. Able to homodimerize via its C-terminal domain. Interacts with NME1. Interacts with GSK3; at focal adhesion complexes where paxillin and vinculin are colocalized. Interacts with alpha and beta tubulin. Mn(2+) is required as a cofactor.

It is found in the cytoplasm. The protein resides in the nucleus. The protein localises to the cell junction. It localises to the focal adhesion. The enzyme catalyses diphosphate + H2O = 2 phosphate + H(+). With respect to regulation, activated by magnesium ions and inhibited by manganese ions. Inhibited by dipyridamole, moderately sensitive to IBMX and inhibited by vinpocetine. Its function is as follows. Phosphodiesterase (PDE) that has higher activity toward cAMP than cGMP, as substrate. Plays a role in cell proliferation, migration and differentiation, and acts as a negative regulator of NME1. Plays a role in the regulation of neurogenesis. Involved in the regulation of microtubule polymerization. The polypeptide is Exopolyphosphatase PRUNE1 (Prune1) (Mus musculus (Mouse)).